The chain runs to 118 residues: DNA-binding protein inhibitor ID-3 (118 aa).

Positions 32 to 84 (SHKGPGVDEPMGLLYDMNGCYSKLKELVPGIPQGSKLSQVEILQHVIDYIFDL) constitute a bHLH domain.

In terms of assembly, homodimer. Heterodimer with other HLH proteins. Interacts (via HLH domain) with the bHLH protein hes4/hairy2 (via Orange domain). Interacts with stat3.

The protein resides in the nucleus. Its function is as follows. Transcriptional regulator (lacking a basic DNA binding domain) which negatively regulates the basic helix-loop-helix (bHLH) transcription factors by forming heterodimers and inhibiting their DNA binding and transcriptional activity. Influences cell fate decisions in the embryo by sequestering and blocking the activity of the bHLH transcription factors that control these decisions. Inhibits the binding of myogenic bHLH-containing complexes to E-box DNA, thereby preventing activation of muscle-specific target genes. Also inhibits the activity of neurogenic factor neurod1/neuroD. Plays a role in cell cycle progression and survival of neural crest progenitors; binding to either hes4-B/hairy2b or stat3 blocks the formation of transcription factor complexes and the repressor function of hes4-B/hairy2B, to allow neural crest progenitors to differentiate. May play a role in the regulation of the circadian rhythm. This is DNA-binding protein inhibitor ID-3 (id3) from Xenopus tropicalis (Western clawed frog).